A 329-amino-acid chain; its full sequence is Quinone oxidoreductase (329 aa).

An N-acetylalanine modification is found at Ala-2. At Lys-23 the chain carries N6-acetyllysine. NADP(+)-binding positions include Tyr-53, 158–161 (SGGV), Gly-181, His-200, Asn-229, 246–249 (VGSR), and 269–271 (VTV). Ser-248 carries the phosphoserine modification. Position 296 is an N6-succinyllysine (Lys-296).

This sequence belongs to the zinc-containing alcohol dehydrogenase family. Quinone oxidoreductase subfamily. In terms of assembly, homotetramer.

It localises to the cytoplasm. The catalysed reaction is 2 a quinone + NADPH + H(+) = 2 a 1,4-benzosemiquinone + NADP(+). Functionally, does not have alcohol dehydrogenase activity. Binds NADP and acts through a one-electron transfer process. Orthoquinones, such as 1,2-naphthoquinone or 9,10-phenanthrenequinone, are the best substrates (in vitro). May act in the detoxification of xenobiotics. Interacts with (AU)-rich elements (ARE) in the 3'-UTR of target mRNA species and enhances their stability. NADPH binding interferes with mRNA binding. The sequence is that of Quinone oxidoreductase (CRYZ) from Pongo abelii (Sumatran orangutan).